A 163-amino-acid polypeptide reads, in one-letter code: NADH-quinone oxidoreductase subunit I (163 aa).

4Fe-4S ferredoxin-type domains are found at residues 54–84 (LRRY…IDSH) and 94–123 (TRYD…LTRL). Positions 64, 67, 70, 74, 103, 106, 109, and 113 each coordinate [4Fe-4S] cluster.

Belongs to the complex I 23 kDa subunit family. In terms of assembly, NDH-1 is composed of 14 different subunits. Subunits NuoA, H, J, K, L, M, N constitute the membrane sector of the complex. It depends on [4Fe-4S] cluster as a cofactor.

It localises to the cell inner membrane. It catalyses the reaction a quinone + NADH + 5 H(+)(in) = a quinol + NAD(+) + 4 H(+)(out). Functionally, NDH-1 shuttles electrons from NADH, via FMN and iron-sulfur (Fe-S) centers, to quinones in the respiratory chain. The immediate electron acceptor for the enzyme in this species is believed to be ubiquinone. Couples the redox reaction to proton translocation (for every two electrons transferred, four hydrogen ions are translocated across the cytoplasmic membrane), and thus conserves the redox energy in a proton gradient. The protein is NADH-quinone oxidoreductase subunit I of Halorhodospira halophila (strain DSM 244 / SL1) (Ectothiorhodospira halophila (strain DSM 244 / SL1)).